Consider the following 178-residue polypeptide: MMAQQEKVVYPRYAVIRLRGIPTTPRDIAVTLDLLRLRRKFTMVVVKGSPSVMGMIQKVNDWVTWGEIDADTLAEVLRKRGRIVGDKPLTLEYLQKWGWHSFEEIALAYVAGEIDSLSCGKKMRIKEGERPPCIPYLKPFFRLHPPRGGLNSVKLHFSVGGDLGYRGPLINDLIRRML.

It belongs to the universal ribosomal protein uL30 family. As to quaternary structure, part of the 50S ribosomal subunit.

This Pyrobaculum aerophilum (strain ATCC 51768 / DSM 7523 / JCM 9630 / CIP 104966 / NBRC 100827 / IM2) protein is Large ribosomal subunit protein uL30.